The sequence spans 385 residues: F-box only protein 4 (385 aa).

Phosphoserine occurs at positions 11 and 46. The F-box domain maps to 54–100 (TSALTRLPVDVQLYILSFLSPHDLCQLGSTDHYWNKTIRDPILWRYF).

Homodimer. Part of the SCF (SKP1-CUL1-F-box) E3 ubiquitin-protein ligase complex SCF(FBXO4) formed of CUL1, SKP1, RBX1 and FBXO4. Interacts with TERF1; this interaction is prevented in the presence of GNL3L. Identified in a complex with CRYAB and CCND1. Post-translationally, phosphorylation at Ser-11 varies during the cell cycle. It is low in resting cells and high in the S phase and the G2/M phase of the cell cycle. Phosphorylation is decreased during late G1 phase. Phosphorylation at Ser-11 is important for homodimerization and for optimal ubiquitin ligase activity towards CCND1.

It localises to the cytoplasm. The protein operates within protein modification; protein ubiquitination. In terms of biological role, substrate recognition component of a SCF (SKP1-CUL1-F-box protein) E3 ubiquitin-protein ligase complex that mediates the ubiquitination and subsequent proteasomal degradation of target proteins. Promotes ubiquitination of cyclin-D1 (CCND1) and its subsequent proteasomal degradation. However, it does not act as a major regulator of CCND1 stability during the G1/S transition. Recognizes TERF1 and promotes its ubiquitination together with UBE2D1. Promotes ubiquitination of FXR1 following phosphorylation of FXR1 by GSK3B, leading to FXR1 degradation by the proteasome. The chain is F-box only protein 4 from Mus musculus (Mouse).